An 82-amino-acid polypeptide reads, in one-letter code: uncharacterized protein (82 aa).

3 consecutive transmembrane segments (helical) span residues 4 to 26 (LDIAFFILPLGIMLLSIVGTCIC), 31 to 48 (LMPMLSLVISLVLTFTIF), and 52 to 74 (FLGWAVVYSLVSLALSYITLIVV).

The protein localises to the cell membrane. This is an uncharacterized protein from Bacillus subtilis (strain 168).